Reading from the N-terminus, the 1301-residue chain is ABC transporter BEA3 (1301 aa).

The segment at 1–30 (MGKRTAENSAANGEGEEKHPEIGVDGRPEK) is disordered. Positions 15–30 (GEEKHPEIGVDGRPEK) are enriched in basic and acidic residues. 4 consecutive transmembrane segments (helical) span residues 54–74 (VGVI…IVFG), 103–123 (LYLL…NFAF), 177–197 (LGVF…AFIY), and 203–223 (LVTF…LPYI). The 292-residue stretch at 54-345 (VGVIASIGVG…ISTPLLAVSK (292 aa)) folds into the ABC transmembrane type-1 1 domain. Residue asparagine 229 is glycosylated (N-linked (GlcNAc...) asparagine). Helical transmembrane passes span 281–301 (FIAL…GLAF) and 313–333 (INQL…VTAM). Residues 378–667 (IILEDVTFAY…EAGLYYNLVN (290 aa)) enclose the ABC transporter 1 domain. 413-420 (GPSGSGKS) is a binding site for ATP. Residues 442-454 (VEKPTDKKNNGGK) show a composition bias toward basic and acidic residues. Residues 442-461 (VEKPTDKKNNGGKEEDEQEL) are disordered. Asparagine 511 and asparagine 618 each carry an N-linked (GlcNAc...) asparagine glycan. The segment at 682 to 708 (VIAKEERPSSVHEKAHTESTIEEKPLE) is disordered. In terms of domain architecture, ABC transmembrane type-1 2 spans 735-1024 (ALTLFFSACA…ALSFGPNVAQ (290 aa)). The next 6 helical transmembrane spans lie at 745-765 (GAAV…FGYL), 779-799 (SLMW…TFFL), 858-878 (SVFI…AFAW), 880-900 (LALV…YWRM), 961-981 (WVSL…AIVL), and 987-1007 (LLLS…SVLN). Residues 1060–1296 (IELENIYFKY…RGVYWQMCQS (237 aa)) enclose the ABC transporter 2 domain. ATP is bound at residue 1094–1101 (GASGSGKS).

Belongs to the ABC transporter superfamily. ABCB family. Multidrug resistance exporter (TC 3.A.1.201) subfamily.

The protein resides in the cell membrane. In terms of biological role, ABC transporter; part of the gene cluster that mediates the biosynthesis of beauvericin (BEA), a non-ribosomal cyclic hexadepsipeptide that shows antibiotic, antifungal, insecticidal, and cancer cell antiproliferative and antihaptotactic activity. Functions as a regulator of beauvericin production, rather than in BEA transport out of the cell. Beauvericin has low toxicity to the producing fungus and BEA3 does not play a role in detoxification and self-protection of the producing fungus. This Gibberella fujikuroi (strain CBS 195.34 / IMI 58289 / NRRL A-6831) (Bakanae and foot rot disease fungus) protein is ABC transporter BEA3.